The chain runs to 232 residues: 5'-methylthioadenosine/S-adenosylhomocysteine nucleosidase (232 aa).

Residue glutamate 12 is the Proton acceptor of the active site. Substrate-binding positions include glycine 78, valine 152, and 173–174; that span reads ME. The active-site Proton donor is aspartate 197.

Belongs to the PNP/UDP phosphorylase family. MtnN subfamily. As to quaternary structure, homodimer.

It carries out the reaction S-adenosyl-L-homocysteine + H2O = S-(5-deoxy-D-ribos-5-yl)-L-homocysteine + adenine. It catalyses the reaction S-methyl-5'-thioadenosine + H2O = 5-(methylsulfanyl)-D-ribose + adenine. The enzyme catalyses 5'-deoxyadenosine + H2O = 5-deoxy-D-ribose + adenine. It participates in amino-acid biosynthesis; L-methionine biosynthesis via salvage pathway; S-methyl-5-thio-alpha-D-ribose 1-phosphate from S-methyl-5'-thioadenosine (hydrolase route): step 1/2. Its function is as follows. Catalyzes the irreversible cleavage of the glycosidic bond in both 5'-methylthioadenosine (MTA) and S-adenosylhomocysteine (SAH/AdoHcy) to adenine and the corresponding thioribose, 5'-methylthioribose and S-ribosylhomocysteine, respectively. Also cleaves 5'-deoxyadenosine, a toxic by-product of radical S-adenosylmethionine (SAM) enzymes, into 5-deoxyribose and adenine. Thus, is required for in vivo function of the radical SAM enzymes biotin synthase and lipoic acid synthase, that are inhibited by 5'-deoxyadenosine accumulation. The polypeptide is 5'-methylthioadenosine/S-adenosylhomocysteine nucleosidase (Buchnera aphidicola subsp. Acyrthosiphon pisum (strain APS) (Acyrthosiphon pisum symbiotic bacterium)).